Reading from the N-terminus, the 349-residue chain is Probable tRNA pseudouridine synthase B (349 aa).

The active-site Nucleophile is the Asp41. Residues 207-279 (YPKVIVKETA…KVIDIDNVLI (73 aa)) form the PUA domain. The span at 300 to 309 (IPVQKPERKL) shows a compositional bias: basic and acidic residues. Positions 300–349 (IPVQKPERKLHGNLQGSQEWKDTGNRGNPKRGGTGSKGFSSGFRKRKAKR) are disordered.

Belongs to the pseudouridine synthase TruB family. Type 2 subfamily.

It carries out the reaction uridine(55) in tRNA = pseudouridine(55) in tRNA. Could be responsible for synthesis of pseudouridine from uracil-55 in the psi GC loop of transfer RNAs. The protein is Probable tRNA pseudouridine synthase B of Picrophilus torridus (strain ATCC 700027 / DSM 9790 / JCM 10055 / NBRC 100828 / KAW 2/3).